The chain runs to 242 residues: MTPDHGPLLYEGKAKRVFAADQPDCVLVEFKNDATAFNALKRAELEGKGRLNCQISARLFEMLEREGVPTHYLGLAAETWMLVQHVDVIPLEVVIRNVATGSLCQQTPIAAGTELSPALLDLYYKDDNLGDPLLSESRLQLLGLISSQQRLEIEQLARRVNQLLLSFFESLDLLLVDFKLELGLNGAGTLLVADEISPDTCRLWDHRNSDPQARILDKDRFRQDLGGVIEAYGEILKRVQGV.

Belongs to the SAICAR synthetase family.

It carries out the reaction 5-amino-1-(5-phospho-D-ribosyl)imidazole-4-carboxylate + L-aspartate + ATP = (2S)-2-[5-amino-1-(5-phospho-beta-D-ribosyl)imidazole-4-carboxamido]succinate + ADP + phosphate + 2 H(+). It functions in the pathway purine metabolism; IMP biosynthesis via de novo pathway; 5-amino-1-(5-phospho-D-ribosyl)imidazole-4-carboxamide from 5-amino-1-(5-phospho-D-ribosyl)imidazole-4-carboxylate: step 1/2. The chain is Phosphoribosylaminoimidazole-succinocarboxamide synthase from Prochlorococcus marinus (strain MIT 9303).